The following is a 540-amino-acid chain: Pentatricopeptide repeat-containing protein At1g80880, mitochondrial (540 aa).

Residues 1 to 87 (MAAIVAIGRK…ETFDINLTAL (87 aa)) constitute a mitochondrion transit peptide. PPR repeat units lie at residues 154-184 (DQKSCDLMIWVLGNHQKFNIAWCLIRDMFNV), 188-222 (TRKAMFLMMDRYAAANDTSQAIRTFDIMDKFKHTP), 223-253 (YDEAFQGLLCALCRHGHIEKAEEFMLASKKL), 257-292 (DVEGFNVILNGWCNIWTDVTEAKRIWREMGNYCITP), 293-327 (NKDSYSHMISCFSKVGNLFDSLRLYDEMKKRGLAP), 328-362 (GIEVYNSLVYVLTREDCFDEAMKLMKKLNEEGLKP), 363-397 (DSVTYNSMIRPLCEAGKLDVARNVLATMISENLSP), 402-428 (FHAFLEAVNFEKTLEVLGQMKISDLGP), 429-463 (TEETFLLILGKLFKGKQPENALKIWAEMDRFEIVA), and 464-498 (NPALYLATIQGLLSCGWLEKAREIYSEMKSKGFVG). Positions 514–540 (VRKSKRMNLQKVGSQEGYKGQRSVDRK) are disordered.

It belongs to the PPR family. P subfamily.

Its subcellular location is the mitochondrion. The chain is Pentatricopeptide repeat-containing protein At1g80880, mitochondrial from Arabidopsis thaliana (Mouse-ear cress).